Reading from the N-terminus, the 104-residue chain is Gastrin (104 aa).

Residues 1–21 (MQRLCAYVLIHVLALAACSEA) form the signal peptide. Positions 22–58 (SWKPGFQLQDASSGPGANRGKEPHELDRLGPASHHRR) are excised as a propeptide. The tract at residues 27–67 (FQLQDASSGPGANRGKEPHELDRLGPASHHRRQLGLQGPPH) is disordered. The span at 40–49 (RGKEPHELDR) shows a compositional bias: basic and acidic residues. A Pyrrolidone carboxylic acid; in form big gastrin modification is found at Q59. Pyrrolidone carboxylic acid; in form gastrin is present on Q76. At Y87 the chain carries Sulfotyrosine; partial. Residue F92 is modified to Phenylalanine amide. S96 carries the phosphoserine modification. The propeptide occupies 96 to 104 (SAEEGDQRP).

This sequence belongs to the gastrin/cholecystokinin family. Post-translationally, sulfation enhances proteolytic processing, and blocks peptide degradation. Levels of sulfation differ between proteolytically-cleaved gastrins. Thus, gastrin-6 is almost 73% sulfated, whereas the larger gastrins are less than 50% sulfated. Sulfation levels are also tissue-specific.

It localises to the secreted. Its function is as follows. Gastrin stimulates the stomach mucosa to produce and secrete hydrochloric acid and the pancreas to secrete its digestive enzymes. It also stimulates smooth muscle contraction and increases blood circulation and water secretion in the stomach and intestine. The sequence is that of Gastrin (GAST) from Sus scrofa (Pig).